We begin with the raw amino-acid sequence, 340 residues long: Methionine import ATP-binding protein MetN (340 aa).

The ABC transporter domain maps to 8 to 246 (ISVKNLNKEI…PYSSITEELF (239 aa)). An ATP-binding site is contributed by 40 to 47 (GHSGSGKS).

This sequence belongs to the ABC transporter superfamily. Methionine importer (TC 3.A.1.24) family. In terms of assembly, the complex is composed of two ATP-binding proteins (MetN), two transmembrane proteins (MetI) and a solute-binding protein (MetQ).

The protein localises to the cell inner membrane. It catalyses the reaction L-methionine(out) + ATP + H2O = L-methionine(in) + ADP + phosphate + H(+). It carries out the reaction D-methionine(out) + ATP + H2O = D-methionine(in) + ADP + phosphate + H(+). Functionally, part of the ABC transporter complex MetNIQ involved in methionine import. Responsible for energy coupling to the transport system. This is Methionine import ATP-binding protein MetN from Chlamydia felis (strain Fe/C-56) (Chlamydophila felis).